Reading from the N-terminus, the 487-residue chain is UDP-N-acetylmuramoyl-L-alanyl-D-glutamate--2,6-diaminopimelate ligase (487 aa).

Leu-23 and Ser-25 together coordinate UDP-N-acetyl-alpha-D-muramoyl-L-alanyl-D-glutamate. Residue 108 to 114 coordinates ATP; the sequence is GTNGKTS. Residues 150–151, Ser-177, Gln-183, and Arg-185 each bind UDP-N-acetyl-alpha-D-muramoyl-L-alanyl-D-glutamate; that span reads TT. The residue at position 217 (Lys-217) is an N6-carboxylysine. Residues Arg-378, 402–405, Gly-453, and Glu-457 contribute to the meso-2,6-diaminopimelate site; that span reads DNPR. The Meso-diaminopimelate recognition motif motif lies at 402 to 405; that stretch reads DNPR.

Belongs to the MurCDEF family. MurE subfamily. The cofactor is Mg(2+). In terms of processing, carboxylation is probably crucial for Mg(2+) binding and, consequently, for the gamma-phosphate positioning of ATP.

It is found in the cytoplasm. It catalyses the reaction UDP-N-acetyl-alpha-D-muramoyl-L-alanyl-D-glutamate + meso-2,6-diaminopimelate + ATP = UDP-N-acetyl-alpha-D-muramoyl-L-alanyl-gamma-D-glutamyl-meso-2,6-diaminopimelate + ADP + phosphate + H(+). Its pathway is cell wall biogenesis; peptidoglycan biosynthesis. In terms of biological role, catalyzes the addition of meso-diaminopimelic acid to the nucleotide precursor UDP-N-acetylmuramoyl-L-alanyl-D-glutamate (UMAG) in the biosynthesis of bacterial cell-wall peptidoglycan. The sequence is that of UDP-N-acetylmuramoyl-L-alanyl-D-glutamate--2,6-diaminopimelate ligase from Ectopseudomonas mendocina (strain ymp) (Pseudomonas mendocina).